A 155-amino-acid polypeptide reads, in one-letter code: Small ribosomal subunit protein uS7cz/uS7cy (155 aa).

Belongs to the universal ribosomal protein uS7 family. As to quaternary structure, part of the 30S ribosomal subunit.

The protein resides in the plastid. Its subcellular location is the chloroplast. Functionally, one of the primary rRNA binding proteins, it binds directly to 16S rRNA where it nucleates assembly of the head domain of the 30S subunit. The protein is Small ribosomal subunit protein uS7cz/uS7cy (rps7-A) of Angiopteris evecta (Mule's foot fern).